A 450-amino-acid chain; its full sequence is MFS-type transporter avaK (450 aa).

Helical transmembrane passes span 18-38 (VMAL…LSMP), 100-120 (RVVC…SGLL), 148-168 (AVAL…AAPA), 171-191 (ALVA…MLFV), 244-264 (APII…HFLL), 280-300 (LVLV…MPAA), 329-349 (FGFF…ALAF), and 408-428 (GWLG…LVAV).

Belongs to the major facilitator superfamily.

The protein resides in the membrane. Its pathway is secondary metabolite biosynthesis. MFS-type transporter; part of the cluster that mediates the biosynthesis of a highly modified cyclo-arginine-tryptophan dipeptide (cRW). This chain is MFS-type transporter avaK, found in Aspergillus versicolor.